A 310-amino-acid polypeptide reads, in one-letter code: Phosphoribosylaminoimidazole-succinocarboxamide synthase (310 aa).

It belongs to the SAICAR synthetase family.

The enzyme catalyses 5-amino-1-(5-phospho-D-ribosyl)imidazole-4-carboxylate + L-aspartate + ATP = (2S)-2-[5-amino-1-(5-phospho-beta-D-ribosyl)imidazole-4-carboxamido]succinate + ADP + phosphate + 2 H(+). Its pathway is purine metabolism; IMP biosynthesis via de novo pathway; 5-amino-1-(5-phospho-D-ribosyl)imidazole-4-carboxamide from 5-amino-1-(5-phospho-D-ribosyl)imidazole-4-carboxylate: step 1/2. This chain is Phosphoribosylaminoimidazole-succinocarboxamide synthase, found in Xanthomonas axonopodis pv. citri (strain 306).